Reading from the N-terminus, the 239-residue chain is Small ribosomal subunit protein eS1 (239 aa).

Residues 1–24 are disordered; that stretch reads MAIQPPGSYPQGNKKGKAKKKSGQ.

The protein belongs to the eukaryotic ribosomal protein eS1 family. As to quaternary structure, component of the small ribosomal subunit. Mature ribosomes consist of a small (40S) and a large (60S) subunit. The 40S subunit contains about 33 different proteins and 1 molecule of RNA (18S). The 60S subunit contains about 49 different proteins and 3 molecules of RNA (25S, 5.8S and 5S).

The protein localises to the cytoplasm. This is Small ribosomal subunit protein eS1 from Encephalitozoon cuniculi (strain GB-M1) (Microsporidian parasite).